Here is an 85-residue protein sequence, read N- to C-terminus: MENLGDLAQGLALLGKYLGAGLCMGIGAIGPGIGEGNIGAHAMDAMARQPEMVGTITTRMLLADAVAETTGIYSLLIAFMILLVV.

2 consecutive transmembrane segments (helical) span residues 10-30 and 65-85; these read GLAL…GAIG and AVAE…LLVV.

This sequence belongs to the ATPase C chain family. As to quaternary structure, F-type ATPases have 2 components, F(1) - the catalytic core - and F(0) - the membrane proton channel. F(1) has five subunits: alpha(3), beta(3), gamma(1), delta(1), epsilon(1). F(0) has three main subunits: a(1), b(2) and c(10-14). The alpha and beta chains form an alternating ring which encloses part of the gamma chain. F(1) is attached to F(0) by a central stalk formed by the gamma and epsilon chains, while a peripheral stalk is formed by the delta and b chains.

The protein resides in the cell inner membrane. Functionally, f(1)F(0) ATP synthase produces ATP from ADP in the presence of a proton or sodium gradient. F-type ATPases consist of two structural domains, F(1) containing the extramembraneous catalytic core and F(0) containing the membrane proton channel, linked together by a central stalk and a peripheral stalk. During catalysis, ATP synthesis in the catalytic domain of F(1) is coupled via a rotary mechanism of the central stalk subunits to proton translocation. Key component of the F(0) channel; it plays a direct role in translocation across the membrane. A homomeric c-ring of between 10-14 subunits forms the central stalk rotor element with the F(1) delta and epsilon subunits. The chain is ATP synthase subunit c from Thermotoga maritima (strain ATCC 43589 / DSM 3109 / JCM 10099 / NBRC 100826 / MSB8).